We begin with the raw amino-acid sequence, 501 residues long: ATP synthase subunit alpha (501 aa).

169–176 contacts ATP; the sequence is GDRQTGKT.

Belongs to the ATPase alpha/beta chains family. As to quaternary structure, F-type ATPases have 2 components, CF(1) - the catalytic core - and CF(0) - the membrane proton channel. CF(1) has five subunits: alpha(3), beta(3), gamma(1), delta(1), epsilon(1). CF(0) has three main subunits: a(1), b(2) and c(9-12). The alpha and beta chains form an alternating ring which encloses part of the gamma chain. CF(1) is attached to CF(0) by a central stalk formed by the gamma and epsilon chains, while a peripheral stalk is formed by the delta and b chains.

The protein localises to the cell membrane. It carries out the reaction ATP + H2O + 4 H(+)(in) = ADP + phosphate + 5 H(+)(out). Its function is as follows. Produces ATP from ADP in the presence of a proton gradient across the membrane. The alpha chain is a regulatory subunit. The polypeptide is ATP synthase subunit alpha (Streptococcus equi subsp. zooepidemicus (strain H70)).